A 286-amino-acid polypeptide reads, in one-letter code: Pantothenate synthetase (286 aa).

30–37 is a binding site for ATP; it reads MGNLHEGH. The Proton donor role is filled by His37. Residue Gln61 coordinates (R)-pantoate. Gln61 contacts beta-alanine. ATP is bound at residue 149 to 152; that stretch reads GRKD. (R)-pantoate is bound at residue Gln155. ATP-binding positions include Val178 and 186–189; that span reads MSSR.

The protein belongs to the pantothenate synthetase family. As to quaternary structure, homodimer.

It localises to the cytoplasm. The enzyme catalyses (R)-pantoate + beta-alanine + ATP = (R)-pantothenate + AMP + diphosphate + H(+). It functions in the pathway cofactor biosynthesis; (R)-pantothenate biosynthesis; (R)-pantothenate from (R)-pantoate and beta-alanine: step 1/1. Functionally, catalyzes the condensation of pantoate with beta-alanine in an ATP-dependent reaction via a pantoyl-adenylate intermediate. The protein is Pantothenate synthetase of Alkalilimnicola ehrlichii (strain ATCC BAA-1101 / DSM 17681 / MLHE-1).